A 328-amino-acid chain; its full sequence is MHIPDNYLSPATCGTLVTAMAPVWTVAVLKVKVQIKKHHETLPMLGIAASLAFLIMMFNLPIPGGTTAHAVGGTLLAVLIGPWAACLALTVTLLLQALLFGDGGILAFGANALNMAVIMPFVGYACYRLGQKWHHEKLGLAIGAYLGINMAALVAGIELGLQPILAHTASGAPLYCPYGLNITIPAMLTAHLLVAGWVEVVFTLLVFQFVKRVAPTNLYQTPTRRNQRPWIALLLGLAVLSPLGLLASNTAWGEWSPQELQQRLAQQHISTHAPQGMVHGFHFQALFSDYAIAGLPVSVGYILSAITAVLIFLLLIRGLQHETDTSQH.

The next 8 helical transmembrane spans lie at 8-28, 42-62, 75-95, 103-123, 138-158, 187-207, 229-249, and 296-316; these read LSPA…TVAV, LPML…NLPI, LLAV…TLLL, GGIL…PFVG, LGLA…AGIE, MLTA…LLVF, PWIA…LASN, and PVSV…LLLI.

The protein belongs to the CbiM family. NikM subfamily. In terms of assembly, may form an energy-coupling factor (ECF) transporter complex composed of an ATP-binding protein (A component, LarO), a transmembrane protein (T component, LarQ) and a fused possible substrate-capture protein (S component, LarMN) of unknown stoichiometry.

The protein resides in the cell membrane. Probably part of the energy-coupling factor (ECF) transporter complex LarMNQO involved in nickel import. The sequence is that of Probable fused nickel transport protein LarMN from Lactiplantibacillus plantarum (strain ATCC BAA-793 / NCIMB 8826 / WCFS1) (Lactobacillus plantarum).